Consider the following 379-residue polypeptide: Dual-specificity RNA methyltransferase RlmN (379 aa).

Glutamate 95 acts as the Proton acceptor in catalysis. Residues 101–345 (EETRGTLCVS…TTVRKTRGDD (245 aa)) enclose the Radical SAM core domain. Cysteine 108 and cysteine 350 are disulfide-bonded. The [4Fe-4S] cluster site is built by cysteine 115, cysteine 119, and cysteine 122. S-adenosyl-L-methionine contacts are provided by residues 176–177 (GE), serine 208, 230–232 (SLH), and asparagine 307. Cysteine 350 functions as the S-methylcysteine intermediate in the catalytic mechanism.

The protein belongs to the radical SAM superfamily. RlmN family. The cofactor is [4Fe-4S] cluster.

It is found in the cytoplasm. It carries out the reaction adenosine(2503) in 23S rRNA + 2 reduced [2Fe-2S]-[ferredoxin] + 2 S-adenosyl-L-methionine = 2-methyladenosine(2503) in 23S rRNA + 5'-deoxyadenosine + L-methionine + 2 oxidized [2Fe-2S]-[ferredoxin] + S-adenosyl-L-homocysteine. The catalysed reaction is adenosine(37) in tRNA + 2 reduced [2Fe-2S]-[ferredoxin] + 2 S-adenosyl-L-methionine = 2-methyladenosine(37) in tRNA + 5'-deoxyadenosine + L-methionine + 2 oxidized [2Fe-2S]-[ferredoxin] + S-adenosyl-L-homocysteine. Specifically methylates position 2 of adenine 2503 in 23S rRNA and position 2 of adenine 37 in tRNAs. m2A2503 modification seems to play a crucial role in the proofreading step occurring at the peptidyl transferase center and thus would serve to optimize ribosomal fidelity. The sequence is that of Dual-specificity RNA methyltransferase RlmN from Burkholderia cenocepacia (strain HI2424).